The following is a 945-amino-acid chain: Leucine--tRNA ligase (945 aa).

The 'HIGH' region motif lies at 66 to 77 (PYPSGTGLHVGH). The 'KMSKS' region motif lies at 716–720 (KMGKS). Lysine 719 is a binding site for ATP.

Belongs to the class-I aminoacyl-tRNA synthetase family.

Its subcellular location is the cytoplasm. It carries out the reaction tRNA(Leu) + L-leucine + ATP = L-leucyl-tRNA(Leu) + AMP + diphosphate. In Rhodococcus jostii (strain RHA1), this protein is Leucine--tRNA ligase.